A 213-amino-acid chain; its full sequence is Probable inactive serine/threonine-protein kinase DDB_G0280559 (213 aa).

Positions 1-211 constitute a Protein kinase domain; that stretch reads MVLRYSYVFK…WNEIVNHSFF (211 aa).

This sequence belongs to the protein kinase superfamily. Ser/Thr protein kinase family.

The protein is Probable inactive serine/threonine-protein kinase DDB_G0280559 of Dictyostelium discoideum (Social amoeba).